Reading from the N-terminus, the 435-residue chain is Serine--tRNA ligase (435 aa).

234 to 236 (TAE) is a binding site for L-serine. Residue 265 to 267 (RRE) participates in ATP binding. Residue Glu288 participates in L-serine binding. An ATP-binding site is contributed by 352-355 (EISS). Ser388 contributes to the L-serine binding site.

This sequence belongs to the class-II aminoacyl-tRNA synthetase family. Type-1 seryl-tRNA synthetase subfamily. In terms of assembly, homodimer. The tRNA molecule binds across the dimer.

Its subcellular location is the cytoplasm. The enzyme catalyses tRNA(Ser) + L-serine + ATP = L-seryl-tRNA(Ser) + AMP + diphosphate + H(+). It catalyses the reaction tRNA(Sec) + L-serine + ATP = L-seryl-tRNA(Sec) + AMP + diphosphate + H(+). The protein operates within aminoacyl-tRNA biosynthesis; selenocysteinyl-tRNA(Sec) biosynthesis; L-seryl-tRNA(Sec) from L-serine and tRNA(Sec): step 1/1. Functionally, catalyzes the attachment of serine to tRNA(Ser). Is also able to aminoacylate tRNA(Sec) with serine, to form the misacylated tRNA L-seryl-tRNA(Sec), which will be further converted into selenocysteinyl-tRNA(Sec). In Synechococcus sp. (strain JA-3-3Ab) (Cyanobacteria bacterium Yellowstone A-Prime), this protein is Serine--tRNA ligase.